Consider the following 261-residue polypeptide: Acyl-[acyl-carrier-protein]--UDP-N-acetylglucosamine O-acyltransferase (261 aa).

The protein belongs to the transferase hexapeptide repeat family. LpxA subfamily. Homotrimer.

The protein localises to the cytoplasm. The catalysed reaction is a (3R)-hydroxyacyl-[ACP] + UDP-N-acetyl-alpha-D-glucosamine = a UDP-3-O-[(3R)-3-hydroxyacyl]-N-acetyl-alpha-D-glucosamine + holo-[ACP]. Its pathway is glycolipid biosynthesis; lipid IV(A) biosynthesis; lipid IV(A) from (3R)-3-hydroxytetradecanoyl-[acyl-carrier-protein] and UDP-N-acetyl-alpha-D-glucosamine: step 1/6. In terms of biological role, involved in the biosynthesis of lipid A, a phosphorylated glycolipid that anchors the lipopolysaccharide to the outer membrane of the cell. The chain is Acyl-[acyl-carrier-protein]--UDP-N-acetylglucosamine O-acyltransferase from Paracoccus denitrificans (strain Pd 1222).